The primary structure comprises 997 residues: Chromosomal passenger complex protein bir1 (997 aa).

BIR repeat units follow at residues 25-99 (RLDT…PWAY) and 120-194 (REQT…VFFT). The Zn(2+) site is built by Cys-163, Cys-166, His-183, and Cys-190. Disordered regions lie at residues 217 to 329 (EDLT…FSKG), 370 to 527 (TVSD…ENDE), 682 to 701 (TRDV…NHEE), 755 to 782 (SPKL…EKEA), and 817 to 838 (RTSV…ETKV). Residues 240–252 (TLNFSPSRKNNLN) show a composition bias toward polar residues. A compositionally biased stretch (basic residues) spans 288–299 (PRRKNKSPKKSK). Positions 311–320 (SDEDEDDDDL) are enriched in acidic residues. Residues 370–392 (TVSDITGHQSVTDESDEQNNCMS) show a composition bias toward polar residues. The segment covering 408–423 (SVVSKSKEISSSVSSV) has biased composition (low complexity). Positions 426-451 (EQNHTEKQVAIETPEQQKVEKEDEHL) are enriched in basic and acidic residues. Composition is skewed to polar residues over residues 463 to 476 (KQPI…SSPD) and 485 to 512 (RVSS…FSNI). Polar residues predominate over residues 756-772 (PKLQSKNNQTVEAVNTE). The segment covering 773-782 (TSDKLQEKEA) has biased composition (basic and acidic residues). The segment covering 817-830 (RTSVQNGTRSVSKN) has biased composition (polar residues).

As to quaternary structure, component of the CPC complex at least composed of ark1, bir1 and pic1. Interacts with the mitotic checkpoint complex (MCC) subunit mad3. Post-translationally, phosphorylated by ark1.

The protein localises to the nucleus. Its subcellular location is the cytoplasm. The protein resides in the cytoskeleton. It is found in the spindle. It localises to the chromosome. The protein localises to the centromere. Functionally, component of the chromosomal passenger complex (CPC), a complex that acts as a key regulator of chromosome segregation and cytokinesis. Has a role in chromosome segregation by recruiting condensin and ark1 kinase to appropriate sites as the cell progresses through mitosis. Ark1 activity depends upon bir1 function and phosphorylation. Ark1 with bir1 function is required for full-scale association with kinetochores and formation of a complex with mad3. The polypeptide is Chromosomal passenger complex protein bir1 (bir1) (Schizosaccharomyces pombe (strain 972 / ATCC 24843) (Fission yeast)).